A 105-amino-acid polypeptide reads, in one-letter code: MSTLPRELVVWPIRCYQRFISPCLPPACRYVPTCSAYAAEAVLTHGVVRGLLLACRRLLRCHPWCAGGYDPVPPPRHSGCAVPGASATATARHATAQELSISHGK.

This sequence belongs to the UPF0161 family.

It is found in the cell inner membrane. Functionally, could be involved in insertion of integral membrane proteins into the membrane. In Nitratidesulfovibrio vulgaris (strain DSM 19637 / Miyazaki F) (Desulfovibrio vulgaris), this protein is Putative membrane protein insertion efficiency factor.